The primary structure comprises 3994 residues: Hybrid PKS-NRPs synthetase opdA (3994 aa).

Residues 6–442 (PEPIAIVGSS…GTNSHVILES (437 aa)) enclose the Ketosynthase family 3 (KS3) domain. Catalysis depends on for beta-ketoacyl synthase activity residues cysteine 179, histidine 316, and histidine 362. The tract at residues 559 to 881 (VFTGQGAQWP…LKRDSNDVEA (323 aa)) is malonyl-CoA:ACP transacylase (MAT) domain. The N-terminal hotdog fold stretch occupies residues 951–1085 (HELLGRRTHD…GRLIIHLGET (135 aa)). Residues 951-1251 (HELLGRRTHD…SVKPMAPPTA (301 aa)) are dehydratase (DH) domain. One can recognise a PKS/mFAS DH domain in the interval 951 to 1252 (HELLGRRTHD…VKPMAPPTAE (302 aa)). Residue histidine 983 is the Proton acceptor; for dehydratase activity of the active site. A C-terminal hotdog fold region spans residues 1100 to 1252 (LLSVDTDEGY…VKPMAPPTAE (153 aa)). Catalysis depends on aspartate 1159, which acts as the Proton donor; for dehydratase activity. Residues 1292–1593 (DRVVLYYVQR…VDLAFHDLPD (302 aa)) form a methyltransferase (MT) domain region. Residues 2123–2297 (TYLMVGMAGG…ASIIHIGFVT (175 aa)) form a ketoreductase (KR) domain region. The Carrier 1 domain occupies 2406–2483 (EAVEITQKAF…QICTNAAKQL (78 aa)). The residue at position 2443 (serine 2443) is an O-(pantetheine 4'-phosphoryl)serine. Residues 2486–2575 (QKGGQEPSEQ…FDPDDRDYNP (90 aa)) are disordered. 2 stretches are compositionally biased toward polar residues: residues 2505 to 2514 (LHVSQGSLHT) and 2522 to 2546 (TETS…SVTD). Basic and acidic residues predominate over residues 2547–2556 (TVEKRDKGDI). The segment covering 2557 to 2570 (SVDEGPNEQFDPDD) has biased composition (acidic residues). The interval 2582–3007 (RLSSGQSRIY…SNTYMTVAKI (426 aa)) is condensation (C) domain. An adenylation (A) (KR) domain region spans residues 3043–3436 (HETNREDLAI…DGSLVFLGRL (394 aa)). Residues 3553 to 3630 (PKLSLRQSEL…KMTMLVDLER (78 aa)) enclose the Carrier 2 domain. Serine 3590 is subject to O-(pantetheine 4'-phosphoryl)serine. The reductase (RED) domain stretch occupies residues 3679–3895 (TGATGFLGGS…FDFKKVEEVA (217 aa)).

In the C-terminal section; belongs to the NRP synthetase family. Pantetheine 4'-phosphate serves as cofactor.

It participates in secondary metabolite biosynthesis. Hybrid PKS-NRPS synthetase; part of the gene cluster that mediates the biosynthesis of oxopyrrolidines, polyketide-amino acid hybrid compounds with feature structures of tetramic acid. The polyketide chain is first assembled by the highly reducing PKS module of opdA using acetyl-CoA as the starter unit and five malonyl-CoA as the extender units. OpdC acts as trans-acting enoyl reductase and reduces the terminal alkenyl to alkane. The 17R in oxopyrrolidine A and 15R, 17S in oxopyrrolidine B are generated by non-stereospecific catalysis of the ketoreductase (KR) domain and enoyl reductases. Then the polyketides with specific configurations are transferred to the NRPS module of opdA and linked to L-tyrosine to form an amide bond. Finally, the oxopyrrolidines are offloaded through a Dieckmann cyclization catalyzed by the terminal D domain to give a tetramic acid moiety. The chain is Hybrid PKS-NRPs synthetase opdA from Penicillium oxalicum (strain 114-2 / CGMCC 5302) (Penicillium decumbens).